The chain runs to 76 residues: Small ribosomal subunit protein uS17 (76 aa).

This sequence belongs to the universal ribosomal protein uS17 family. As to quaternary structure, part of the 30S ribosomal subunit.

One of the primary rRNA binding proteins, it binds specifically to the 5'-end of 16S ribosomal RNA. The sequence is that of Small ribosomal subunit protein uS17 from Ruegeria pomeroyi (strain ATCC 700808 / DSM 15171 / DSS-3) (Silicibacter pomeroyi).